We begin with the raw amino-acid sequence, 411 residues long: DNA polymerase IV (411 aa).

Positions 18-211 constitute a UmuC domain; it reads VVHVDMDCFY…LDVADLHGVG (194 aa). D22 and D130 together coordinate Mg(2+). E131 is a catalytic residue. 2 disordered regions span residues 248–280 and 376–411; these read FHRRARGADSRPVEPRGKPKSLSRESSFDGATE and GFSGDETGDGGGHEGGACGGAGRGSCGGQTTLDEFT. Residues 253–274 are compositionally biased toward basic and acidic residues; sequence RGADSRPVEPRGKPKSLSRESS. Gly residues predominate over residues 384-402; that stretch reads DGGGHEGGACGGAGRGSCG.

This sequence belongs to the DNA polymerase type-Y family. In terms of assembly, monomer. It depends on Mg(2+) as a cofactor.

The protein resides in the cytoplasm. The catalysed reaction is DNA(n) + a 2'-deoxyribonucleoside 5'-triphosphate = DNA(n+1) + diphosphate. Functionally, poorly processive, error-prone DNA polymerase involved in untargeted mutagenesis. Copies undamaged DNA at stalled replication forks, which arise in vivo from mismatched or misaligned primer ends. These misaligned primers can be extended by PolIV. Exhibits no 3'-5' exonuclease (proofreading) activity. May be involved in translesional synthesis. The protein is DNA polymerase IV of Halobacterium salinarum (strain ATCC 29341 / DSM 671 / R1).